Here is a 156-residue protein sequence, read N- to C-terminus: MPRKGHIAKRDVLPDPVYNSKVVTKFINSIMEDGKKGVAQKICYEAFGLIAKRSGKEALEVFEEAMNNVMPLLEVKARRIGGATYQVPIEVRPERRQTLGIRWMLIAARKRGEKLMSERVAGELLDASNNTGAAVKKREDTHKMAEANKAFAHYRY.

It belongs to the universal ribosomal protein uS7 family. Part of the 30S ribosomal subunit. Contacts proteins S9 and S11.

In terms of biological role, one of the primary rRNA binding proteins, it binds directly to 16S rRNA where it nucleates assembly of the head domain of the 30S subunit. Is located at the subunit interface close to the decoding center, probably blocks exit of the E-site tRNA. This Clostridium beijerinckii (strain ATCC 51743 / NCIMB 8052) (Clostridium acetobutylicum) protein is Small ribosomal subunit protein uS7.